Here is a 252-residue protein sequence, read N- to C-terminus: Imidazole glycerol phosphate synthase subunit HisF (252 aa).

Active-site residues include Asp11 and Asp130.

The protein belongs to the HisA/HisF family. In terms of assembly, heterodimer of HisH and HisF.

It localises to the cytoplasm. The enzyme catalyses 5-[(5-phospho-1-deoxy-D-ribulos-1-ylimino)methylamino]-1-(5-phospho-beta-D-ribosyl)imidazole-4-carboxamide + L-glutamine = D-erythro-1-(imidazol-4-yl)glycerol 3-phosphate + 5-amino-1-(5-phospho-beta-D-ribosyl)imidazole-4-carboxamide + L-glutamate + H(+). It participates in amino-acid biosynthesis; L-histidine biosynthesis; L-histidine from 5-phospho-alpha-D-ribose 1-diphosphate: step 5/9. Its function is as follows. IGPS catalyzes the conversion of PRFAR and glutamine to IGP, AICAR and glutamate. The HisF subunit catalyzes the cyclization activity that produces IGP and AICAR from PRFAR using the ammonia provided by the HisH subunit. The protein is Imidazole glycerol phosphate synthase subunit HisF of Streptococcus gordonii (strain Challis / ATCC 35105 / BCRC 15272 / CH1 / DL1 / V288).